Consider the following 214-residue polypeptide: Ribonuclease HII (214 aa).

In terms of domain architecture, RNase H type-2 spans 27–214 (SVVAGIDEAG…SPIKQMCAIV (188 aa)). A divalent metal cation-binding residues include Asp-33, Glu-34, and Asp-126.

This sequence belongs to the RNase HII family. Requires Mn(2+) as cofactor. The cofactor is Mg(2+).

It is found in the cytoplasm. It catalyses the reaction Endonucleolytic cleavage to 5'-phosphomonoester.. Endonuclease that specifically degrades the RNA of RNA-DNA hybrids. In Chlamydia pneumoniae (Chlamydophila pneumoniae), this protein is Ribonuclease HII (rnhB).